A 346-amino-acid chain; its full sequence is Hydroxyproline O-galactosyltransferase HPGT3 (346 aa).

Polar residues predominate over residues 1 to 10; the sequence is MESLPTTVPS. Residues 1–21 are disordered; the sequence is MESLPTTVPSKSERRARSSKF. The Cytoplasmic portion of the chain corresponds to 1-28; that stretch reads MESLPTTVPSKSERRARSSKFSQSSSKP. A helical; Signal-anchor for type II membrane protein transmembrane segment spans residues 29-45; that stretch reads SVIMAFFSCVAWLYVAG. The Lumenal portion of the chain corresponds to 46-346; sequence RLWQDAENRV…IRQDKVCSVA (301 aa).

This sequence belongs to the glycosyltransferase 31 family. Requires Mn(2+) as cofactor. In terms of tissue distribution, expressed in roots, rosette leaves, cauline leaves, stems, flowers and siliques.

Its subcellular location is the golgi apparatus membrane. Its pathway is protein modification; protein glycosylation. Possesses hydroxyproline O-galactosyltransferase activity. Transfers galactose from UDP-galactose to hydroxyproline residues in the arabinogalactan proteins (AGPs). Is specific for AGPs containing non-contiguous peptidyl hydroxyproline residues. The addition of galactose onto the peptidyl hydroxyproline residues in AGP core proteins represents the first committed step in arabinogalactan polysaccharide addition. AGP glycans play essential roles in both vegetative and reproductive plant growth. This is Hydroxyproline O-galactosyltransferase HPGT3 from Arabidopsis thaliana (Mouse-ear cress).